Consider the following 501-residue polypeptide: Dipeptide and tripeptide permease A (501 aa).

Over 1–21 (MSTANNKPAESVSLNAFKQPR) the chain is Cytoplasmic. The chain crosses the membrane as a helical span at residues 22–44 (AFYLIFSIELWERFGYYGLQGIM). The Periplasmic segment spans residues 45-59 (AVYLVKQLGMSEADS). A helical membrane pass occupies residues 60-80 (ITLFSSFSALVYGLVAIGGWL). The Cytoplasmic segment spans residues 81 to 89 (GDKVLGTKR). A helical transmembrane segment spans residues 90–110 (VIMLGAIVLAIGYALVAWSGH). A topological domain (periplasmic) is located at residue aspartate 111. A helical transmembrane segment spans residues 112 to 132 (AAIVYMGMATIAVGNGLFKAN). Topologically, residues 133–153 (PSSLLSTCYDKNDPRLDGAFT) are cytoplasmic. The chain crosses the membrane as a helical span at residues 154 to 174 (MYYMSINIGSFFSMLATPWLA). Residues 175–178 (ARFG) are Periplasmic-facing. The chain crosses the membrane as a helical span at residues 179-199 (WSVAFALSVVGMVITIINFAF). Over 200-218 (CQKWVKQYGSKPDFAPVHM) the chain is Cytoplasmic. A helical transmembrane segment spans residues 219–239 (GKLLATIAGVVVLVAIATWLL). The Periplasmic segment spans residues 240–246 (HNQGIAR). Residues 247–267 (MVLGVVALGIVVIFAKETIGL) form a helical membrane-spanning segment. Topologically, residues 268-274 (KGAARRK) are cytoplasmic. A helical transmembrane segment spans residues 275–295 (MIVAFLLMVEAIVFFVLYSQM). The Periplasmic segment spans residues 296 to 320 (PTSLNFFAIRNVEHSILGIAFEPEQ). A helical membrane pass occupies residues 321-341 (YQALNPFWIMIGSPILAAIYN). At 342-352 (KMGDRLPMPHK) the chain is on the cytoplasmic side. A helical membrane pass occupies residues 353-373 (FAIGMVLCSGAFLVLPLGAKF). Residues 374-383 (ASDAGIVSVN) lie on the Periplasmic side of the membrane. Residues 384 to 404 (WLILSYALQSIGELMISGLGL) form a helical membrane-spanning segment. The Cytoplasmic segment spans residues 405–414 (AMVAQLVPQR). A helical transmembrane segment spans residues 415–435 (LMGFIMGSWFLTTAGAAIIAG). Residues 436-459 (KIANLMAVPENVTDPLVSLEVYGH) are Periplasmic-facing. Residues 460–480 (VFLQIGIVTAVIAALMLLTAP) traverse the membrane as a helical segment. Topologically, residues 481 to 501 (KLNRMTQDDSADLKARETAAA) are cytoplasmic.

Belongs to the major facilitator superfamily. Proton-dependent oligopeptide transporter (POT/PTR) (TC 2.A.17) family. DtpA subfamily.

The protein resides in the cell inner membrane. Its function is as follows. Proton-dependent permease that transports di- and tripeptides. The polypeptide is Dipeptide and tripeptide permease A (Klebsiella pneumoniae (strain 342)).